A 151-amino-acid chain; its full sequence is Histone H2A.2.2 (151 aa).

Residue methionine 1 is modified to N-acetylmethionine. A disordered region spans residues 129-151; sequence EKAEKAGTKAKSPKKATKSPKKA. Positions 139–151 are enriched in basic residues; it reads KSPKKATKSPKKA. 2 short sequence motifs (SPKK motif) span residues 140 to 143 and 147 to 150; these read SPKK.

This sequence belongs to the histone H2A family. In terms of assembly, the nucleosome is a histone octamer containing two molecules each of H2A, H2B, H3 and H4 assembled in one H3-H4 heterotetramer and two H2A-H2B heterodimers. The octamer wraps approximately 147 bp of DNA. In terms of processing, phosphorylated within its C-terminal part, probably at the SPKK motifs.

It localises to the nucleus. The protein resides in the chromosome. Its function is as follows. Core component of nucleosome. Nucleosomes wrap and compact DNA into chromatin, limiting DNA accessibility to the cellular machineries which require DNA as a template. Histones thereby play a central role in transcription regulation, DNA repair, DNA replication and chromosomal stability. DNA accessibility is regulated via a complex set of post-translational modifications of histones, also called histone code, and nucleosome remodeling. The sequence is that of Histone H2A.2.2 from Triticum aestivum (Wheat).